A 248-amino-acid polypeptide reads, in one-letter code: 7-cyano-7-deazaguanine synthase (248 aa).

22–32 (LSGGLDSTTCL) is a binding site for ATP. 4 residues coordinate Zn(2+): cysteine 216, cysteine 225, cysteine 228, and cysteine 231.

Belongs to the QueC family. Zn(2+) serves as cofactor.

The enzyme catalyses 7-carboxy-7-deazaguanine + NH4(+) + ATP = 7-cyano-7-deazaguanine + ADP + phosphate + H2O + H(+). The protein operates within purine metabolism; 7-cyano-7-deazaguanine biosynthesis. In terms of biological role, catalyzes the ATP-dependent conversion of 7-carboxy-7-deazaguanine (CDG) to 7-cyano-7-deazaguanine (preQ(0)). In Leptospira biflexa serovar Patoc (strain Patoc 1 / Ames), this protein is 7-cyano-7-deazaguanine synthase.